Here is a 203-residue protein sequence, read N- to C-terminus: Inosine triphosphate pyrophosphatase (203 aa).

10–15 (TGNQNK) is a binding site for ITP. Glu-40 is a binding site for Mg(2+). ITP-binding positions include Lys-52, 68–69 (DT), Lys-85, 145–148 (FGWD), Lys-168, and 173–174 (HR).

The protein belongs to the HAM1 NTPase family. Homodimer. Requires Mg(2+) as cofactor. The cofactor is Mn(2+).

Its subcellular location is the cytoplasm. The catalysed reaction is ITP + H2O = IMP + diphosphate + H(+). It catalyses the reaction dITP + H2O = dIMP + diphosphate + H(+). It carries out the reaction XTP + H2O = XMP + diphosphate + H(+). Pyrophosphatase that hydrolyzes non-canonical purine nucleotides such as inosine triphosphate (ITP), deoxyinosine triphosphate (dITP) or xanthosine 5'-triphosphate (XTP) to their respective monophosphate derivatives. The enzyme does not distinguish between the deoxy- and ribose forms. Probably excludes non-canonical purines from RNA and DNA precursor pools, thus preventing their incorporation into RNA and DNA and avoiding chromosomal lesions. In Nematostella vectensis (Starlet sea anemone), this protein is Inosine triphosphate pyrophosphatase.